The primary structure comprises 452 residues: Enolase (452 aa).

Glutamine 167 contacts (2R)-2-phosphoglycerate. The active-site Proton donor is glutamate 209. The Mg(2+) site is built by aspartate 250, glutamate 307, and aspartate 334. Residues lysine 359, arginine 388, serine 389, and lysine 410 each coordinate (2R)-2-phosphoglycerate. Lysine 359 functions as the Proton acceptor in the catalytic mechanism.

It belongs to the enolase family. Mg(2+) serves as cofactor.

Its subcellular location is the cytoplasm. It is found in the secreted. The protein localises to the cell surface. The enzyme catalyses (2R)-2-phosphoglycerate = phosphoenolpyruvate + H2O. The protein operates within carbohydrate degradation; glycolysis; pyruvate from D-glyceraldehyde 3-phosphate: step 4/5. Catalyzes the reversible conversion of 2-phosphoglycerate (2-PG) into phosphoenolpyruvate (PEP). It is essential for the degradation of carbohydrates via glycolysis. The chain is Enolase from Mesomycoplasma hyopneumoniae (strain 232) (Mycoplasma hyopneumoniae).